Consider the following 690-residue polypeptide: Elongation factor G (690 aa).

The 276-residue stretch at 8 to 283 (EDYRNFGIMA…AVVDYLPSPV (276 aa)) folds into the tr-type G domain. GTP-binding positions include 17–24 (AHIDAGKT), 81–85 (DTPGH), and 135–138 (NKMD).

It belongs to the TRAFAC class translation factor GTPase superfamily. Classic translation factor GTPase family. EF-G/EF-2 subfamily.

The protein resides in the cytoplasm. In terms of biological role, catalyzes the GTP-dependent ribosomal translocation step during translation elongation. During this step, the ribosome changes from the pre-translocational (PRE) to the post-translocational (POST) state as the newly formed A-site-bound peptidyl-tRNA and P-site-bound deacylated tRNA move to the P and E sites, respectively. Catalyzes the coordinated movement of the two tRNA molecules, the mRNA and conformational changes in the ribosome. The protein is Elongation factor G of Rhodopseudomonas palustris (strain HaA2).